Reading from the N-terminus, the 272-residue chain is Cell division protein FtsQ (272 aa).

Residues 1–20 lie on the Cytoplasmic side of the membrane; sequence MSSYAPREIPLDIRLMQGTS. A helical membrane pass occupies residues 21 to 40; it reads RALFWLVALGCLFVAGHWLM. The Periplasmic portion of the chain corresponds to 41–272; the sequence is QRNWWDIRAV…KTPQPAGRKD (232 aa). Residues 45 to 114 enclose the POTRA domain; that stretch reads WDIRAVRLQG…MQLAVTLQAQ (70 aa).

It belongs to the FtsQ/DivIB family. FtsQ subfamily. In terms of assembly, part of a complex composed of FtsB, FtsL and FtsQ.

It is found in the cell inner membrane. Essential cell division protein. May link together the upstream cell division proteins, which are predominantly cytoplasmic, with the downstream cell division proteins, which are predominantly periplasmic. May control correct divisome assembly. The chain is Cell division protein FtsQ from Thiomonas arsenitoxydans (strain DSM 22701 / CIP 110005 / 3As).